Consider the following 488-residue polypeptide: 3-octaprenyl-4-hydroxybenzoate carboxy-lyase (488 aa).

Asn-172 contributes to the Mn(2+) binding site. Prenylated FMN-binding positions include 175-177, 189-191, and 194-195; these read IYR, RWL, and RG. A Mn(2+)-binding site is contributed by Glu-238. The Proton donor role is filled by Asp-287.

It belongs to the UbiD family. Homohexamer. Prenylated FMN is required as a cofactor. The cofactor is Mn(2+).

It localises to the cell membrane. The catalysed reaction is a 4-hydroxy-3-(all-trans-polyprenyl)benzoate + H(+) = a 2-(all-trans-polyprenyl)phenol + CO2. It functions in the pathway cofactor biosynthesis; ubiquinone biosynthesis. Functionally, catalyzes the decarboxylation of 3-octaprenyl-4-hydroxy benzoate to 2-octaprenylphenol, an intermediate step in ubiquinone biosynthesis. This is 3-octaprenyl-4-hydroxybenzoate carboxy-lyase from Pseudomonas paraeruginosa (strain DSM 24068 / PA7) (Pseudomonas aeruginosa (strain PA7)).